The chain runs to 453 residues: Ribosomal protein uS12 methylthiotransferase RimO (453 aa).

The MTTase N-terminal domain occupies 5–120 (PKVGFVSLGC…VMQAVHSHLP (116 aa)). Positions 14, 50, 79, 151, 155, and 158 each coordinate [4Fe-4S] cluster. The Radical SAM core domain occupies 137-382 (LTPRHYAYLK…MEVAEEVSAQ (246 aa)). The 69-residue stretch at 385-453 (QRKVGKTLKV…ADGHDLWGEV (69 aa)) folds into the TRAM domain.

It belongs to the methylthiotransferase family. RimO subfamily. Requires [4Fe-4S] cluster as cofactor.

The protein localises to the cytoplasm. It carries out the reaction L-aspartate(89)-[ribosomal protein uS12]-hydrogen + (sulfur carrier)-SH + AH2 + 2 S-adenosyl-L-methionine = 3-methylsulfanyl-L-aspartate(89)-[ribosomal protein uS12]-hydrogen + (sulfur carrier)-H + 5'-deoxyadenosine + L-methionine + A + S-adenosyl-L-homocysteine + 2 H(+). Functionally, catalyzes the methylthiolation of an aspartic acid residue of ribosomal protein uS12. The sequence is that of Ribosomal protein uS12 methylthiotransferase RimO from Burkholderia ambifaria (strain ATCC BAA-244 / DSM 16087 / CCUG 44356 / LMG 19182 / AMMD) (Burkholderia cepacia (strain AMMD)).